The primary structure comprises 321 residues: Protein ZAR1-like (321 aa).

The disordered stretch occupies residues 110–214 (RTLSSCSPWD…GDAASEPLRR (105 aa)). The segment covering 145–154 (LRRDGDEAES) has biased composition (basic and acidic residues). The 3CxxC-type zinc-finger motif lies at 222–307 (PKYGYFHCKD…QELCGRCKDK (86 aa)).

This sequence belongs to the ZAR1 family. As to quaternary structure, interacts with YBX2.

It localises to the cytoplasm. The protein localises to the cytoplasmic ribonucleoprotein granule. Functionally, mRNA-binding protein required for maternal mRNA storage, translation and degradation during oocyte maturation. Probably promotes formation of some phase-separated membraneless compartment that stores maternal mRNAs in oocytes: acts by undergoing liquid-liquid phase separation upon binding to maternal mRNAs. Binds to the 3'-UTR of maternal mRNAs, inhibiting their translation. The polypeptide is Protein ZAR1-like (Homo sapiens (Human)).